The following is a 1003-amino-acid chain: X-linked retinitis pigmentosa GTPase regulator (1003 aa).

RCC1 repeat units lie at residues asparagine 54–glycine 105, glycine 106–aspartate 158, glycine 159–glutamate 208, glycine 209–lysine 261, alanine 262–methionine 313, and glycine 314–proline 367. Serine 418 carries the post-translational modification Phosphoserine. A disordered region spans residues threonine 460 to leucine 495. Over residues aspartate 472 to aspartate 485 the composition is skewed to basic and acidic residues. Residues asparagine 486–leucine 495 show a composition bias toward polar residues. Serine 520 is modified (phosphoserine). 4 disordered regions span residues phenylalanine 625–methionine 657, glutamate 691–asparagine 760, leucine 794–lysine 932, and alanine 968–leucine 1003. Basic and acidic residues predominate over residues lysine 693–isoleucine 715. Composition is skewed to acidic residues over residues glutamate 716–serine 726 and isoleucine 797–glutamate 821. The span at alanine 827–histidine 848 shows a compositional bias: basic and acidic residues. The segment covering glutamate 849–leucine 867 has biased composition (acidic residues). Over residues serine 882–isoleucine 896 the composition is skewed to basic and acidic residues. The span at serine 913–serine 924 shows a compositional bias: low complexity. The span at glutamine 978–serine 989 shows a compositional bias: polar residues. The residue at position 1000 (cysteine 1000) is a Cysteine methyl ester. Cysteine 1000 carries S-geranylgeranyl cysteine lipidation. A propeptide spans threonine 1001 to leucine 1003 (removed in mature form).

Interacts with PDE6D. Interacts with RPGRIP1. Interacts with RPGRIP1L. PDE6D, RPGRIP1 and RPGRIP1L may compete for the same binding sites. Interacts with NPM1. Interacts with SMC1A and SMC3. Interacts with CEP290. Interacts with WHRN. Interacts with SPATA7. Interacts with RAB37 and RAB8A (in GDP-bound forms); functions as GEF for RAB37 and RAB8A. Prenylated. Isoform 1 is expressed exclusively in testis. Isoforms 2, 3 and 4 are widely expressed.

Its subcellular location is the golgi apparatus. The protein localises to the cell projection. It localises to the cilium. The protein resides in the cytoplasm. It is found in the cytoskeleton. Its subcellular location is the cilium basal body. The protein localises to the microtubule organizing center. It localises to the centrosome. The protein resides in the cilium axoneme. It is found in the flagellum axoneme. Functionally, acts as a guanine-nucleotide releasing factor (GEF) for RAB8A and RAB37 by promoting the conversion of inactive RAB-GDP to the active form RAB-GTP. GEF activity towards RAB8A may facilitate ciliary trafficking by modulating ciliary intracellular localization of RAB8A. GEF activity towards RAB37 maintains autophagic homeostasis and retinal function. Involved in photoreceptor integrity. May control cilia formation by regulating actin stress filaments and cell contractility. May be involved in microtubule organization and regulation of transport in primary cilia. May play a critical role in spermatogenesis and in intraflagellar transport processes. The polypeptide is X-linked retinitis pigmentosa GTPase regulator (RPGR) (Canis lupus familiaris (Dog)).